The following is a 772-amino-acid chain: Ion-translocating oxidoreductase complex subunit C (772 aa).

4Fe-4S ferredoxin-type domains lie at 369-397 and 407-436; these read GEPQ…QQLY and KATT…VQYF. Residues Cys377, Cys380, Cys383, Cys387, Cys416, Cys419, Cys422, and Cys426 each contribute to the [4Fe-4S] cluster site. Disordered stretches follow at residues 602–684, 696–717, and 727–746; these read KLEQ…DPRK, ARKL…PRKA, and KARK…QVDP. A compositionally biased stretch (low complexity) spans 605–615; sequence QQQANAEPEQQ.

This sequence belongs to the 4Fe4S bacterial-type ferredoxin family. RnfC subfamily. As to quaternary structure, the complex is composed of six subunits: RsxA, RsxB, RsxC, RsxD, RsxE and RsxG. The cofactor is [4Fe-4S] cluster.

It is found in the cell inner membrane. Its function is as follows. Part of a membrane-bound complex that couples electron transfer with translocation of ions across the membrane. Required to maintain the reduced state of SoxR. The chain is Ion-translocating oxidoreductase complex subunit C from Escherichia coli O157:H7 (strain EC4115 / EHEC).